The chain runs to 404 residues: Glucoside xylosyltransferase 1 (404 aa).

The Cytoplasmic segment spans residues 1–6 (MRRYLR). Residues 7-29 (VVGLCLACGFCSLLYAFSQLAVS) traverse the membrane as a helical; Signal-anchor for type II membrane protein segment. Residues 30 to 404 (LEEGAAGGRR…NRYDTPPKER (375 aa)) are Lumenal-facing. A glycan (N-linked (GlcNAc...) asparagine) is linked at Asn-201.

The protein belongs to the glycosyltransferase 8 family.

It is found in the membrane. It carries out the reaction 3-O-(beta-D-glucosyl)-L-seryl-[EGF-like domain protein] + UDP-alpha-D-xylose = 3-O-[alpha-D-xylosyl-(1-&gt;3)-beta-D-glucosyl]-L-seryl-[EGF-like domain protein] + UDP + H(+). Its function is as follows. Glycosyltransferase which elongates the O-linked glucose attached to EGF-like repeats in the extracellular domain of Notch proteins by catalyzing the addition of xylose. This Mus musculus (Mouse) protein is Glucoside xylosyltransferase 1 (Gxylt1).